Here is a 219-residue protein sequence, read N- to C-terminus: uncharacterized protein (219 aa).

A compositionally biased stretch (low complexity) spans 1–17; the sequence is MIINNQNSPQSINTPSS. The segment at 1–31 is disordered; that stretch reads MIINNQNSPQSINTPSSVSSRQHINKSKKKK. A run of 2 helical transmembrane segments spans residues 49-69 and 83-105; these read SLATVFGVIGGLVLGIVLVCK and LVYRIVGIFLSAGTGGNLSSYIG. The segment at 135-219 is disordered; it reads NHRSPIPLTN…NSDLEIPIPI (85 aa). A compositionally biased stretch (low complexity) spans 144–212; that stretch reads NLNNNNNNNN…SNNNNDNNSD (69 aa).

The protein resides in the membrane. This is an uncharacterized protein from Dictyostelium discoideum (Social amoeba).